A 266-amino-acid chain; its full sequence is Phosphatidylglycerol--prolipoprotein diacylglyceryl transferase (266 aa).

7 helical membrane-spanning segments follow: residues 10–30 (VALAIGPLKIHWYGLMYLIGI), 56–76 (LVFWVACGVILGGRLGYVLFY), 92–112 (WKGGMSFHGGLLGVMLAVWWF), 120–140 (FFQLMDFIAPLVPIGLGAGRI), 171–191 (PSQLYQFALEGVALFVILWLF), 199–219 (ASVSGLFVLCYGIFRFVVEFV), and 233–253 (WLTMGQVLCVPMVLAGIALMV). Residue Arg139 participates in a 1,2-diacyl-sn-glycero-3-phospho-(1'-sn-glycerol) binding.

The protein belongs to the Lgt family.

It is found in the cell inner membrane. The catalysed reaction is L-cysteinyl-[prolipoprotein] + a 1,2-diacyl-sn-glycero-3-phospho-(1'-sn-glycerol) = an S-1,2-diacyl-sn-glyceryl-L-cysteinyl-[prolipoprotein] + sn-glycerol 1-phosphate + H(+). The protein operates within protein modification; lipoprotein biosynthesis (diacylglyceryl transfer). Its function is as follows. Catalyzes the transfer of the diacylglyceryl group from phosphatidylglycerol to the sulfhydryl group of the N-terminal cysteine of a prolipoprotein, the first step in the formation of mature lipoproteins. This Pseudomonas aeruginosa (strain LESB58) protein is Phosphatidylglycerol--prolipoprotein diacylglyceryl transferase.